A 583-amino-acid polypeptide reads, in one-letter code: COP9 signalosome complex subunit 10 (583 aa).

The span at 1 to 35 (MSDEEDYAEYMMSEEDMSSFEMDVDSDVEPDDAGL) shows a compositional bias: acidic residues. The interval 1-55 (MSDEEDYAEYMMSEEDMSSFEMDVDSDVEPDDAGLEQDQQVTGDDYDGSAGNSGD) is disordered. In terms of domain architecture, PCI spans 297–485 (DHYNQSQMLS…DYVYFGEEYF (189 aa)).

In terms of assembly, component of a COP9 signalosome-like (CSN) complex.

It localises to the cytoplasm. It is found in the nucleus. In terms of biological role, component of the COP9 signalosome (CSN) complex that acts as an regulator of the ubiquitin (Ubl) conjugation pathway by mediating the deneddylation of the cullin subunit of SCF-type E3 ubiquitin-protein ligase complexes. The CSN complex is involved in the regulation of the mating pheromone response. In Kluyveromyces lactis (strain ATCC 8585 / CBS 2359 / DSM 70799 / NBRC 1267 / NRRL Y-1140 / WM37) (Yeast), this protein is COP9 signalosome complex subunit 10 (RRI2).